The following is a 362-amino-acid chain: Porin Omp2b (362 aa).

The signal sequence occupies residues 1 to 22; sequence MNIKSLLLGSAAALVAASGAQA.

Belongs to the alphaproteobacteria porin family. In terms of assembly, homotrimer.

It is found in the cell outer membrane. Functionally, forms passive diffusion pores that allow small molecular weight hydrophilic materials across the outer membrane. This is Porin Omp2b (omp2b) from Brucella melitensis biotype 1 (strain ATCC 23456 / CCUG 17765 / NCTC 10094 / 16M).